Consider the following 545-residue polypeptide: Cleavage and polyadenylation specificity factor subunit 6 (545 aa).

Residues I37–P69 form a disordered region. The RRM domain maps to I81–K161. The segment covering S165 to M180 has biased composition (polar residues). Disordered regions lie at residues S165–E404 and Y478–R545. Over residues G184 to P200 the composition is skewed to gly residues. 4 stretches are compositionally biased toward pro residues: residues P220–F230, P237–G265, P287–N363, and G372–P383. Composition is skewed to basic and acidic residues over residues P384–A397 and G483–R497. Residues E498–R508 show a composition bias toward basic residues. Residues D509–R545 show a composition bias toward basic and acidic residues.

This sequence belongs to the RRM CPSF6/7 family. In terms of assembly, component of the cleavage factor Im (CFIm) complex.

Its subcellular location is the nucleus. It is found in the nucleoplasm. The protein resides in the nucleus speckle. The protein localises to the cytoplasm. Its function is as follows. Component of the cleavage factor Im (CFIm) complex that functions as an activator of the pre-mRNA 3'-end cleavage and polyadenylation processing required for the maturation of pre-mRNA into functional mRNAs. CFIm contributes to the recruitment of multiprotein complexes on specific sequences on the pre-mRNA 3'-end, so called cleavage and polyadenylation signals (pA signals). Most pre-mRNAs contain multiple pA signals, resulting in alternative cleavage and polyadenylation (APA) producing mRNAs with variable 3'-end formation. The CFIm complex acts as a key regulator of cleavage and polyadenylation site choice during APA through its binding to 5'-UGUA-3' elements localized in the 3'-untranslated region (UTR) for a huge number of pre-mRNAs. Plays a role in mRNA export. The sequence is that of Cleavage and polyadenylation specificity factor subunit 6 from Danio rerio (Zebrafish).